The sequence spans 389 residues: Sulfate adenylyltransferase (389 aa).

The protein belongs to the sulfate adenylyltransferase family.

It carries out the reaction sulfate + ATP + H(+) = adenosine 5'-phosphosulfate + diphosphate. It participates in sulfur metabolism; hydrogen sulfide biosynthesis; sulfite from sulfate: step 1/3. This chain is Sulfate adenylyltransferase, found in Hyperthermus butylicus (strain DSM 5456 / JCM 9403 / PLM1-5).